Here is an 84-residue protein sequence, read N- to C-terminus: Small ribosomal subunit protein uS17 (84 aa).

Belongs to the universal ribosomal protein uS17 family. As to quaternary structure, part of the 30S ribosomal subunit.

Its function is as follows. One of the primary rRNA binding proteins, it binds specifically to the 5'-end of 16S ribosomal RNA. In Borreliella burgdorferi (strain ATCC 35210 / DSM 4680 / CIP 102532 / B31) (Borrelia burgdorferi), this protein is Small ribosomal subunit protein uS17.